The primary structure comprises 388 residues: S-adenosylmethionine synthase (388 aa).

Residue H17 coordinates ATP. Residue D19 coordinates Mg(2+). E45 is a K(+) binding site. E58 and Q101 together coordinate L-methionine. Residues 101–111 (QSPDIGQGVDT) are flexible loop. ATP-binding positions include 160 to 162 (DGK), 226 to 227 (RF), D235, 241 to 242 (RK), A258, and K262. L-methionine is bound at residue D235. K266 contributes to the L-methionine binding site.

Belongs to the AdoMet synthase family. In terms of assembly, homotetramer; dimer of dimers. The cofactor is Mg(2+). K(+) is required as a cofactor.

The protein localises to the cytoplasm. The catalysed reaction is L-methionine + ATP + H2O = S-adenosyl-L-methionine + phosphate + diphosphate. It participates in amino-acid biosynthesis; S-adenosyl-L-methionine biosynthesis; S-adenosyl-L-methionine from L-methionine: step 1/1. Functionally, catalyzes the formation of S-adenosylmethionine (AdoMet) from methionine and ATP. The overall synthetic reaction is composed of two sequential steps, AdoMet formation and the subsequent tripolyphosphate hydrolysis which occurs prior to release of AdoMet from the enzyme. The protein is S-adenosylmethionine synthase of Anaeromyxobacter sp. (strain K).